A 581-amino-acid polypeptide reads, in one-letter code: MKSHIQSLLEQAIQTLKQQAIIPADFEARIQVDRTKDKTHGDFATNLAMMLTKVARKNPREVAQLIIDSLPQNSQVAKVEIAGPGFINFFIDENALTNQLMAALSDDHLGVTLPTPQTVVVDYSSPNLAKEMHVGHLRSTIIGDAVVRALEFQGHKVIRQNHVGDWGTQFGMLLAYMEELRAQQGEQAQVELADLESFYRAAKVRFDESEEFATRARQLVVELQSGDEYCNKLWREFNDISLSHCHEVYERLGVSLTRADVRGESAYNDDLEQVVRDLDAQGLLSESNGAKVVFQDEFQTKEGEPLPVIIQKADGGFLYATSDLAAMRYRSNVLKADRALYFVDLRQALHFQQVFSLARTANFVRPELSLEHMGFGTMNGEDGRPFKTRSGGVVKLVDLLSEAETRALELVRSKNPDMDEEELAKIAKVVGIASVKYADLSKNRASDYIFSFEQMLSFEGNTAPYLLYAYTRVAGIFKRAAEIDLTGASIKLEHDKEKELGNKLAQFAEVLGRMVAKGQPHALCGYLFELAGAFSSFYEACPVLAADSEDEKKSRLLLAQLTAKTLKQGLDLLGIETLERM.

Residues 126–136 (PNLAKEMHVGH) carry the 'HIGH' region motif.

Belongs to the class-I aminoacyl-tRNA synthetase family. In terms of assembly, monomer.

The protein resides in the cytoplasm. It catalyses the reaction tRNA(Arg) + L-arginine + ATP = L-arginyl-tRNA(Arg) + AMP + diphosphate. This Shewanella loihica (strain ATCC BAA-1088 / PV-4) protein is Arginine--tRNA ligase.